Consider the following 154-residue polypeptide: Probable biofilm-surface layer protein B (154 aa).

The first 30 residues, 1–30 (MLKRTSFVSSLFISSAVLLSILLPSGQAHA), serve as a signal peptide directing secretion.

It belongs to the BslA/BslB family. As to quaternary structure, monomer in vitro.

Its subcellular location is the secreted. Its function is as follows. Has a minor role in biofilm architecture. May contribute to the surface hydrophobicity. This chain is Probable biofilm-surface layer protein B, found in Bacillus subtilis (strain 168).